Consider the following 365-residue polypeptide: Succinyl-diaminopimelate desuccinylase (365 aa).

Residue H65 coordinates Zn(2+). The active site involves D67. D96 lines the Zn(2+) pocket. E126 (proton acceptor) is an active-site residue. Residues E127, E155, and H340 each contribute to the Zn(2+) site.

The protein belongs to the peptidase M20A family. DapE subfamily. As to quaternary structure, homodimer. It depends on Zn(2+) as a cofactor. Co(2+) is required as a cofactor.

The catalysed reaction is N-succinyl-(2S,6S)-2,6-diaminopimelate + H2O = (2S,6S)-2,6-diaminopimelate + succinate. The protein operates within amino-acid biosynthesis; L-lysine biosynthesis via DAP pathway; LL-2,6-diaminopimelate from (S)-tetrahydrodipicolinate (succinylase route): step 3/3. Its function is as follows. Catalyzes the hydrolysis of N-succinyl-L,L-diaminopimelic acid (SDAP), forming succinate and LL-2,6-diaminopimelate (DAP), an intermediate involved in the bacterial biosynthesis of lysine and meso-diaminopimelic acid, an essential component of bacterial cell walls. The polypeptide is Succinyl-diaminopimelate desuccinylase (Campylobacter jejuni subsp. jejuni serotype O:2 (strain ATCC 700819 / NCTC 11168)).